We begin with the raw amino-acid sequence, 382 residues long: Chaperone protein DnaJ (382 aa).

Positions 5–70 constitute a J domain; it reads DYYEVLGLKK…QKRAAYDQYG (66 aa). The CR-type zinc-finger motif lies at 134–212; that stretch reads GTTKDIQINT…CHGEGRVHKK (79 aa). C147, C150, C164, C167, C186, C189, C200, and C203 together coordinate Zn(2+). CXXCXGXG motif repeat units follow at residues 147-154, 164-171, 186-193, and 200-207; these read CDSCGGSG, CPHCHGSG, CPSCHGSG, and CRSCHGEG.

Belongs to the DnaJ family. As to quaternary structure, homodimer. The cofactor is Zn(2+).

It is found in the cytoplasm. In terms of biological role, participates actively in the response to hyperosmotic and heat shock by preventing the aggregation of stress-denatured proteins and by disaggregating proteins, also in an autonomous, DnaK-independent fashion. Unfolded proteins bind initially to DnaJ; upon interaction with the DnaJ-bound protein, DnaK hydrolyzes its bound ATP, resulting in the formation of a stable complex. GrpE releases ADP from DnaK; ATP binding to DnaK triggers the release of the substrate protein, thus completing the reaction cycle. Several rounds of ATP-dependent interactions between DnaJ, DnaK and GrpE are required for fully efficient folding. Also involved, together with DnaK and GrpE, in the DNA replication of plasmids through activation of initiation proteins. In Haemophilus influenzae (strain PittGG), this protein is Chaperone protein DnaJ.